A 741-amino-acid chain; its full sequence is Linoleate 9S-lipoxygenase (741 aa).

Residues 1 to 53 (IPGAFYIKNFMQVEFYLKSLTLEDIPNHGTIHFICNSWIYNSKVYKSDRIFFA) enclose the PLAT domain. Positions 56–741 (TYLPSETPAP…SEEGLTFRGI (686 aa)) constitute a Lipoxygenase domain. Residues 108-144 (ALARPVLGGSTLPYPRRGRTGRPKTKKDPNSEKPSDF) form a disordered region. Over residues 123–132 (RRGRTGRPKT) the composition is skewed to basic residues. Basic and acidic residues predominate over residues 133-144 (KKDPNSEKPSDF). Positions 407, 412, 598, and 602 each coordinate Fe cation.

This sequence belongs to the lipoxygenase family. Monomer. Requires Fe cation as cofactor.

The protein resides in the cytoplasm. The enzyme catalyses (9Z,12Z)-octadecadienoate + O2 = (9S)-hydroperoxy-(10E,12Z)-octadecadienoate. It carries out the reaction (9Z,12Z)-octadecadienoate + O2 = (13S)-hydroperoxy-(9Z,11E)-octadecadienoate. It catalyses the reaction (9Z,12Z,15Z)-octadecatrienoate + O2 = (13S)-hydroperoxy-(9Z,11E,15Z)-octadecatrienoate. Its pathway is lipid metabolism; oxylipin biosynthesis. Functionally, plant lipoxygenase may be involved in a number of diverse aspects of plant physiology including growth and development, pest resistance, and senescence or responses to wounding. It catalyzes the hydroperoxidation of lipids containing a cis,cis-1,4-pentadiene structure. The polypeptide is Linoleate 9S-lipoxygenase (Phaseolus vulgaris (Kidney bean)).